Reading from the N-terminus, the 1013-residue chain is Retinoblastoma-related protein 1 (1013 aa).

The tract at residues 406-607 is domain A; the sequence is TPVSTAMTTA…EKGSSMYNSL (202 aa). A pocket region spans residues 406–858; it reads TPVSTAMTTA…NEIFIPAVKP (453 aa). Positions 608 to 727 are spacer; the sequence is IVARPSLALE…PGGGGETCAE (120 aa). The tract at residues 728–858 is domain B; the sequence is TGINIFFTKI…NEIFIPAVKP (131 aa). Phosphoserine occurs at positions 885 and 898. The segment at 979 to 1013 is disordered; the sequence is VANSLNLQNQNQNQNGSDASSSGGAAPLKTEPTDS. Residues 980–1004 show a composition bias toward low complexity; sequence ANSLNLQNQNQNQNGSDASSSGGAA.

This sequence belongs to the retinoblastoma protein (RB) family. As to quaternary structure, interacts with the begomovirus replication-associated protein (Rep), the nanovirus Clink protein, the mastrevirus RepA protein, E2FA, E2FB and E2FC. Interacts with MSI1 through its Domain A. Interacts with ATPK1/S6K1. Interacts with SCR. Interacts with HAT2. Interacts with FAMA. Interacts with MYB124 and MYB88. Component of a DREAM-like complex which modulates a variety of developmentally regulated genes and of the mitotic genes in proliferating and differentiated cells. Associates with MYB3R3 in both earlier and later stages of leaves development. Interacts with MYB3R4 only at early stages of leaves development. In terms of processing, highly phosphorylated by CDKA-1 during G1 to S phase transition. Once hyper-phosphorylated, becomes inactive and unable to interact with E2F. Post-translationally, ubiquitinated. Subject to proteasome-dependent degradation during sucrose starvation. As to expression, expressed in actively dividing cells. Detected in the shoot apical meristem, in young leaf primordia and in both sporophytic tissue and the megagametophyte.

The protein localises to the nucleus. Functionally, key regulator of entry into cell division. Acts as a transcription repressor of E2F target genes, whose activity is required for progress from the G1 to the S phase of the cell cycle. Hyperphosphorylation by CDKA-1 prevents the binding to E2F transcription factors, allowing G1 to S phase transition to operate. Forms a stable complex with E2FA that functions in maintaining cell proliferation through repression of cell differentiation. Plays a central role in the mechanism controlling meristem cell differentiation, cell fate establishment and cell fate maintenance during organogenesis and gametogenesis. Required during lateral organ production. Also involved in controlling asymmetric divisions of stem cells in different stem cell niches. Acts as a negative regulator of cell proliferation during leaf and gametophytes development. At later stages of development, restricts the progression through additional endocycles. In the leaf, plays a role in the control of the mesophyll differentiation. Another role is its implication in the regulation of imprinted genes. Acts together with MSI1 to repress the expression of MET1 during gametogenesis. This in turn activates expression of the imprinted genes FIS2 and FWA. Regulates many genes of the polycomb repressive complex 2 (PRC2). Plays an important role in meiosis affecting different aspects of this complex process. Functions as a positive regulator of the developmental switch from embryonic heterotrophic growth to autotrophic growth. Interaction with mastrevirus RepA or nanovirus Clink protein disrupts the RBR/E2F interaction and releases the transcription of replicative enzymes needed by the virus by increasing the E2F DNA-binding activity. In Arabidopsis thaliana (Mouse-ear cress), this protein is Retinoblastoma-related protein 1 (RBR1).